Reading from the N-terminus, the 422-residue chain is Cell division protein DivIB (422 aa).

2 stretches are compositionally biased toward basic and acidic residues: residues 1-23 and 62-75; these read MVDW…KQEE and EEAK…DQEQ. The tract at residues 1–77 is disordered; it reads MVDWDKEAQR…DFAKDQEQKH (77 aa). Topologically, residues 1 to 109 are cytoplasmic; that stretch reads MVDWDKEAQR…LQLKSVSWSR (109 aa). A helical membrane pass occupies residues 110–130; that stretch reads LILAAAFLFMIIFSAFWLSPL. In terms of domain architecture, POTRA spans 131 to 202; the sequence is NRIATIEVSG…RTVEVNVQEF (72 aa). Residues 131 to 422 are Extracellular-facing; that stretch reads NRIATIEVSG…TVTQTRSSNS (292 aa). Residues 329–422 are disordered; it reads NPLNDPFASP…TVTQTRSSNS (94 aa). Basic and acidic residues predominate over residues 338–379; that stretch reads PEEKASYQEKVDQAKEKSKEKQAKADKHSSESKLGDKPKPRG. Over residues 389 to 422 the composition is skewed to low complexity; the sequence is TSSQRQTSSQSSPRPGTNSSQQSSTVTQTRSSNS.

Belongs to the FtsQ/DivIB family. DivIB subfamily.

The protein localises to the cell membrane. Functionally, cell division protein that may be involved in stabilizing or promoting the assembly of the division complex. The protein is Cell division protein DivIB of Aerococcus urinae (strain CCUG 59500 / ACS-120-V-Col10a).